The chain runs to 505 residues: Prenylcysteine oxidase 1 (505 aa).

The signal sequence occupies residues 1 to 28 (MGRFAAALVGSLFWLGLLLCGLGSLASA). N-linked (GlcNAc...) asparagine glycosylation is found at asparagine 196, asparagine 323, and asparagine 353.

This sequence belongs to the prenylcysteine oxidase family. Requires FAD as cofactor. In terms of tissue distribution, highly expressed in the liver, kidney, heart and brain.

Its subcellular location is the lysosome. It catalyses the reaction an S-polyprenyl-L-cysteine + O2 + H2O = a polyprenal + L-cysteine + H2O2. It carries out the reaction S-(2E,6E)-farnesyl-L-cysteine + O2 + H2O = (2E,6E)-farnesal + L-cysteine + H2O2. The enzyme catalyses [(2E,6E,10E)-geranylgeranyl]-L-cysteine + O2 + H2O = (2E,6E,10E)-geranylgeranial + L-cysteine + H2O2. In terms of biological role, prenylcysteine oxidase that cleaves the thioether bond of prenyl-L-cysteines, such as farnesylcysteine and geranylgeranylcysteine. Only active against free prenylcysteines and not prenylcysteine residues within prenylated proteins or peptides. Involved in the final step in the degradation of prenylated proteins, by degrading prenylcysteines after the protein has been degraded. This Mus musculus (Mouse) protein is Prenylcysteine oxidase 1.